The sequence spans 146 residues: Large ribosomal subunit protein uL15 (146 aa).

Positions 1–10 (MKLHELKPAE) are enriched in basic and acidic residues. The tract at residues 1–51 (MKLHELKPAEGSRQVRNRVGRGTSSGNGKTAGRGQKGQKARSGGGVRLGFE) is disordered. Composition is skewed to gly residues over residues 23–35 (TSSGNGKTAGRGQ) and 42–51 (SGGGVRLGFE).

It belongs to the universal ribosomal protein uL15 family. As to quaternary structure, part of the 50S ribosomal subunit.

In terms of biological role, binds to the 23S rRNA. This Enterococcus faecalis (strain ATCC 700802 / V583) protein is Large ribosomal subunit protein uL15.